The sequence spans 115 residues: Superoxide reductase (115 aa).

Fe cation contacts are provided by Glu-14, His-16, His-41, His-47, Cys-102, and His-105.

Belongs to the desulfoferrodoxin family. Homotetramer. The cofactor is Fe cation.

The catalysed reaction is reduced [rubredoxin] + superoxide + 2 H(+) = oxidized [rubredoxin] + H2O2. Its function is as follows. Uses electrons from reduced NADP, by way of rubredoxin and an oxidoreductase, to catalyze the reduction of superoxide to hydrogen peroxide. The protein is Superoxide reductase (sorA) of Pyrococcus horikoshii (strain ATCC 700860 / DSM 12428 / JCM 9974 / NBRC 100139 / OT-3).